The sequence spans 301 residues: Sulfate adenylyltransferase subunit 2 (301 aa).

The interval 282–301 (RLIDRDEAGSMEKKKREGYF) is disordered.

Belongs to the PAPS reductase family. CysD subfamily. In terms of assembly, heterodimer composed of CysD, the smaller subunit, and CysN.

It catalyses the reaction sulfate + ATP + H(+) = adenosine 5'-phosphosulfate + diphosphate. The protein operates within sulfur metabolism; hydrogen sulfide biosynthesis; sulfite from sulfate: step 1/3. Functionally, with CysN forms the ATP sulfurylase (ATPS) that catalyzes the adenylation of sulfate producing adenosine 5'-phosphosulfate (APS) and diphosphate, the first enzymatic step in sulfur assimilation pathway. APS synthesis involves the formation of a high-energy phosphoric-sulfuric acid anhydride bond driven by GTP hydrolysis by CysN coupled to ATP hydrolysis by CysD. The polypeptide is Sulfate adenylyltransferase subunit 2 (Chelativorans sp. (strain BNC1)).